Reading from the N-terminus, the 306-residue chain is tRNA N6-adenosine threonylcarbamoyltransferase (306 aa).

Positions 110 and 114 each coordinate Fe cation. Substrate-binding positions include 132 to 136 (IASGK), aspartate 165, glycine 178, aspartate 182, and asparagine 268. Aspartate 292 is a Fe cation binding site.

It belongs to the KAE1 / TsaD family. Requires Fe(2+) as cofactor.

Its subcellular location is the cytoplasm. The catalysed reaction is L-threonylcarbamoyladenylate + adenosine(37) in tRNA = N(6)-L-threonylcarbamoyladenosine(37) in tRNA + AMP + H(+). In terms of biological role, required for the formation of a threonylcarbamoyl group on adenosine at position 37 (t(6)A37) in tRNAs that read codons beginning with adenine. Is involved in the transfer of the threonylcarbamoyl moiety of threonylcarbamoyl-AMP (TC-AMP) to the N6 group of A37, together with TsaE and TsaB. TsaD likely plays a direct catalytic role in this reaction. The polypeptide is tRNA N6-adenosine threonylcarbamoyltransferase (Malacoplasma penetrans (strain HF-2) (Mycoplasma penetrans)).